The chain runs to 536 residues: Methyl-accepting chemotaxis aspartate transducer (536 aa).

The Cytoplasmic segment spans residues 1–10; sequence MFNRIRISTS. A helical transmembrane segment spans residues 11 to 31; the sequence is LFLLLISFCIMQLISTGLSYV. Residues 32–188 are Periplasmic-facing; it reads ALRADNHNLE…ASSQQAYGWS (157 aa). Positions 64 to 73 are the 3 Arg may form a positively charged pocket, which binds the alpha-carboxyl group of the attractant AA; the sequence is RNTLNRAGTR. A helical transmembrane segment spans residues 189–209; that stretch reads IWLVAGAVLMLLVVTLSAMWW. Residues 210-536 lie on the Cytoplasmic side of the membrane; the sequence is LRTMLVQPLN…VKETLDCQTA (327 aa). The region spanning 212–264 is the HAMP domain; that stretch reads TMLVQPLNIIRGHFERIASGDLSAPIEVYGRNEISQLFASLQRMQQSLIGTVG. Residues 269–498 form the Methyl-accepting transducer domain; it reads GAESILIGLQ…ESASAAAALE (230 aa). Glutamate methyl ester (Gln) is present on Gln-293. Glu-300 is modified (glutamate methyl ester (Glu)). Gln-307 is modified (glutamate methyl ester (Gln)). Glu-489 and Glu-498 each carry glutamate methyl ester (Glu).

It belongs to the methyl-accepting chemotaxis (MCP) protein family.

The protein resides in the cell inner membrane. In terms of biological role, this protein responds to changes in Asp concentration in the environment, transduces a signal from the outside to the inside of the cell, and facilitates sensory adaptation through various levels of methylation. Functionally, chemotactic-signal transducers respond to changes in the concentration of attractants and repellents in the environment, transduce a signal from the outside to the inside of the cell, and facilitate sensory adaptation through the variation of the level of methylation. Attractants increase the level of methylation while repellents decrease the level of methylation, the methyl groups are added by the methyltransferase CheR and removed by the methylesterase CheB. The protein is Methyl-accepting chemotaxis aspartate transducer (tas) of Klebsiella aerogenes (strain ATCC 13048 / DSM 30053 / CCUG 1429 / JCM 1235 / KCTC 2190 / NBRC 13534 / NCIMB 10102 / NCTC 10006 / CDC 819-56) (Enterobacter aerogenes).